The sequence spans 709 residues: Zinc finger CCHC domain-containing protein 8 (709 aa).

The disordered stretch occupies residues 1–47 (MAAGVDFGDLELFEAFDPPEESTPKPVHTRFKDDEEEEDDDDDENGV). A2 bears the N-acetylalanine mark. 2 stretches are compositionally biased toward acidic residues: residues 8–20 (GDLE…DPPE) and 34–46 (DEEE…DENG). Residues 48–83 (GDAELQEQLRRCEATIEQLRAENQELKRKLNILTRP) are a coiled coil. Residues 230–247 (PHCFNCGSEEHQMKECPM) form a CCHC-type zinc finger. RBM7 binding regions lie at residues 289 to 302 (FKPG…QDAL) and 312 to 327 (FIYR…GWLK). Disordered stretches follow at residues 409-518 (IQSP…EDAL) and 533-667 (ALQQ…DMSK). A compositionally biased stretch (low complexity) spans 410 to 430 (QSPSMRSSGKRSSSQSSPNSP). The segment covering 468 to 499 (PPLPPGTPPPLPQGTPPPLFTPPLPKGTPPLT) has biased composition (pro residues). 4 positions are modified to phosphothreonine: T474, T482, T488, and T495. A compositionally biased stretch (polar residues) spans 552 to 562 (LTGNSVASSPC). Residue S601 is modified to Phosphoserine. Residues 635 to 645 (MNMSNGSNQQP) show a composition bias toward polar residues. Phosphoserine occurs at positions 660 and 697. Residues 661-709 (PVPDMSKFATGITPFEFENMAESTGMYLRIRNLLKNSPRNQQKNKKTCE) form an MTREX binding region.

Belongs to the ZCCHC8 family. Component of a nuclear TRAMP-like complex, an ATP-dependent exosome regulatory complex consisting of a helicase (MTREX), an oligadenylate polymerase (TENT4B or TENT4A), and a substrate specific RNA-binding factor (ZCCHC7 or ZCCHC8). Several TRAMP-like complexes exist with specific compositions and are associated with nuclear, or nucleolar RNA exosomes. Identified in the spliceosome C complex. Component of the nuclear exosome targeting (NEXT) complex composed of MTREX, ZCCHC8, and RBM7 that directs a subset of non-coding short-lived RNAs for exosomal degradation. Interacts with proteins involved in RNA processing and degradation such as MTREX and RBM7; interaction with MTREX enhances MTREX RNA helicase activity and bridges between RBM7 and MTREX. Interacts with TERC, the telomerase RNA component. Post-translationally, phosphorylation at Thr-495 by GSK3 is triggered in cells entering mitosis.

It localises to the nucleus. The protein localises to the nucleoplasm. Scaffolding subunit of the trimeric nuclear exosome targeting (NEXT) complex that is involved in the surveillance and turnover of aberrant transcripts and non-coding RNAs. NEXT functions as an RNA exosome cofactor that directs a subset of non-coding short-lived RNAs for exosomal degradation. May be involved in pre-mRNA splicing. It is required for 3'-end maturation of telomerase RNA component (TERC), TERC 3'-end targeting to the nuclear RNA exosome, and for telomerase function. In Mus musculus (Mouse), this protein is Zinc finger CCHC domain-containing protein 8 (Zcchc8).